The primary structure comprises 113 residues: Transcriptional activator RamA (113 aa).

Positions 9 to 107 constitute an HTH araC/xylS-type domain; it reads DTIVEWIDDN…HQPPGAYRKE (99 aa). 2 consecutive DNA-binding regions (H-T-H motif) follow at residues 26-47 and 74-97; these read EDIA…LQYK and VYEI…TRTF.

Functionally, probable transcriptional activator. The chain is Transcriptional activator RamA (ramA) from Enterobacter cloacae.